The chain runs to 377 residues: MALNHTALPQDERLPHYLRDEDPFASKLSWEADLVAGFYLTIIGILSTFGNGYVLYMSSRRKKKLRPAEIMTINLAVCDLGISVVGKPFTIISCFCHRWVFGWFGCRWYGWAGFFFGCGSLITMTAVSLDRYLKICYLSYGVWLKRKHAYICLAVIWAYASFWTTMPLVGLGDYAPEPFGTSCTLDWWLAQASGGGQVFILSILFFCLLLPTAVIVFSYAKIIAKVKSSSKEVAHFDSRIHSSHVLEVKLTKVAMLICAGFLIAWIPYAVVSVWSAFGRPDSIPIQLSVVPTLLAKSAAMYNPIIYQVIDYRFACCQAGGLRGTKKKSLEDFRLHTVTAVRKSSAVLEIHPESSSRFTSAHVMDGESHSNDGDCGKK.

Residues 1–33 (MALNHTALPQDERLPHYLRDEDPFASKLSWEAD) are Extracellular-facing. Residue Asn-4 is glycosylated (N-linked (GlcNAc...) asparagine). Residues 34–54 (LVAGFYLTIIGILSTFGNGYV) traverse the membrane as a helical segment. Over 55 to 74 (LYMSSRRKKKLRPAEIMTIN) the chain is Cytoplasmic. Residues 75–95 (LAVCDLGISVVGKPFTIISCF) form a helical membrane-spanning segment. The Extracellular portion of the chain corresponds to 96 to 108 (CHRWVFGWFGCRW). Cysteines 106 and 183 form a disulfide. The chain crosses the membrane as a helical span at residues 109–129 (YGWAGFFFGCGSLITMTAVSL). Topologically, residues 130–150 (DRYLKICYLSYGVWLKRKHAY) are cytoplasmic. A helical transmembrane segment spans residues 151-171 (ICLAVIWAYASFWTTMPLVGL). Residues 172 to 197 (GDYAPEPFGTSCTLDWWLAQASGGGQ) are Extracellular-facing. Residues 198–218 (VFILSILFFCLLLPTAVIVFS) form a helical membrane-spanning segment. Topologically, residues 219–252 (YAKIIAKVKSSSKEVAHFDSRIHSSHVLEVKLTK) are cytoplasmic. Residues 253 to 273 (VAMLICAGFLIAWIPYAVVSV) form a helical membrane-spanning segment. The Extracellular segment spans residues 274-288 (WSAFGRPDSIPIQLS). The helical transmembrane segment at 289–309 (VVPTLLAKSAAMYNPIIYQVI) threads the bilayer. Lys-296 carries the N6-(retinylidene)lysine modification. The Cytoplasmic portion of the chain corresponds to 310–377 (DYRFACCQAG…HSNDGDCGKK (68 aa)). 2 S-palmitoyl cysteine lipidation sites follow: Cys-315 and Cys-316. Positions 357 to 377 (FTSAHVMDGESHSNDGDCGKK) are disordered. Residues 363–377 (MDGESHSNDGDCGKK) are compositionally biased toward basic and acidic residues.

This sequence belongs to the G-protein coupled receptor 1 family. Opsin subfamily. Post-translationally, it is uncertain whether Cys-315 or Cys-316 is palmitoylated. As to expression, expressed in the brain (at protein level). Weakly expressed in the skin and liver (at protein level). Abundantly expressed in striated muscle cells. Expressed in Math7/Atok7-dependent retinal ganglion cells in the ganglion cell layer (at protein level). Additionally expressed in horizontal and amacrine cells in the inner nuclear layer of the retina (at protein level). Expressed around the base of hair follicles and in epidermal and sebaceous gland cells of the outer ear (at protein level). Abundantly expressed in vibrissae hair follicles and weakly expressed in the vibrissae skin pad, dorsal back skin, and tail.

The protein resides in the cell membrane. G-protein coupled receptor which selectively activates G(i) type G proteins via ultraviolet A (UVA) light-mediated activation in the retina. Preferentially binds the chromophore 11-cis retinal and is a bistable protein that displays emission peaks at 380 nm (UVA light) and 470 nm (blue light). Required for the light-response in the inner plexiform layer, and contributes to the regulation of the light-response in the nerve fiber layer, via phosphorylated DAT/SLC6A3 dopamine uptake. Involved in local corneal and retinal circadian rhythm photoentrainment via modulation of the UVA light-induced phase-shift of the retina clock. Acts as a circadian photoreceptor in the outer ear and vibrissal pads, via modulation of circadian clock-gene expression in response to violet light during the light-to-dark transition phase and night phase of the circadian cycle. Required in the retina to negatively regulate hyaloid vessel regression during postnatal development via light-dependent OPN5-SLC32A1-DRD2-VEGFR2 signaling. Involved in the light-dependent regulation of retina and vitreous compartment dopamine levels. The polypeptide is Opsin-5 (Opn5) (Mus musculus (Mouse)).